The primary structure comprises 600 residues: MKYKDEKYEKAEKGSRILPKTVLLILLCGLSFYLGGLYCGKNIIEVSDVAKAESSSLDVDDSLQVKSVSFSECSSDYQDYTPCTDPRKWKKYGTHRLTFMERHCPPVFDRKQCLVPPPDGYKPPIRWPKSKDECWYRNVPYDWINKQKSNQNWLRKEGEKFIFPGGGTMFPHGVSAYVDLMQDLIPEMKDGTIRTAIDTGCGVASWGGDLLDRGILTVSLAPRDNHEAQVQFALERGIPAILGIISTQRLPFPSNSFDMAHCSRCLIPWTEFGGVYLLEVHRILRPGGFWVLSGPPVNYENRWKGWDTTIEEQRSNYEKLQELLSSMCFKMYAKKDDIAVWQKSPDNLCYNKLSNDPDAYPPKCDDSLEPDSAWYTPLRPCVVVPSPKLKKTDLESTPKWPERLHTTPERISDVPGGNGNVFKHDDSKWKTRAKHYKKLLPAIGSDKIRNVMDMNTAYGGLAAALVNDPLWVMNVVSSYAANTLPVVFDRGLIGTYHDWCEAFSTYPRTYDLLHVDGLFTSESQRCDMKYVMLEMDRILRPSGYAIIRESSYFADSIASVAKELRWSCRKEQTESASANEKLLICQKKLWYSSNASSETN.

Residues 1 to 16 (MKYKDEKYEKAEKGSR) are Cytoplasmic-facing. A helical; Signal-anchor for type II membrane protein membrane pass occupies residues 17 to 37 (ILPKTVLLILLCGLSFYLGGL). The Lumenal portion of the chain corresponds to 38 to 600 (YCGKNIIEVS…YSSNASSETN (563 aa)). A glycan (N-linked (GlcNAc...) asparagine) is linked at Asn594.

Belongs to the methyltransferase superfamily.

It is found in the endoplasmic reticulum membrane. The protein is Probable methyltransferase PMT21 (ERD3) of Arabidopsis thaliana (Mouse-ear cress).